A 225-amino-acid polypeptide reads, in one-letter code: Pre-mRNA-splicing factor SPF27 (225 aa).

Positions 138-222 (SNDNLALMIE…QGDENKENIR (85 aa)) form a coiled coil.

The protein belongs to the SPF27 family. Component of the pre-catalytic and catalytic spliceosome complexes. Component of the postcatalytic spliceosome P complex.

It localises to the nucleus. Its function is as follows. Required for pre-mRNA splicing as component of the activated spliceosome. May have a scaffolding role in the spliceosome assembly as it contacts all other components of the core complex. The chain is Pre-mRNA-splicing factor SPF27 (bcas2) from Danio rerio (Zebrafish).